Here is a 256-residue protein sequence, read N- to C-terminus: Probable ABC transporter ATP-binding protein SPy_0285/M5005_Spy0242 (256 aa).

Residues 4–246 (LEINNLHVSI…EKEGYAGIAQ (243 aa)) enclose the ABC transporter domain. 36–43 (GPNGTGKS) lines the ATP pocket.

This sequence belongs to the ABC transporter superfamily. Ycf16 family.

The protein localises to the cell membrane. The polypeptide is Probable ABC transporter ATP-binding protein SPy_0285/M5005_Spy0242 (Streptococcus pyogenes serotype M1).